A 559-amino-acid polypeptide reads, in one-letter code: Apolipoprotein N-acyltransferase 2 (559 aa).

6 helical membrane passes run 27–47, 53–73, 86–106, 114–134, 153–173, and 187–207; these read LAGS…GFLL, HVAC…SFWL, ASTV…ACIL, ACAF…GILA, IADI…NACV, and VPVF…SLYG. Residues 221-507 form the CN hydrolase domain; that stretch reads LALAIVQQNA…SAVLHVPVYP (287 aa). E288 functions as the Proton acceptor in the catalytic mechanism. The active site involves K358. The Nucleophile role is filled by C416. Residues 519 to 539 traverse the membrane as a helical segment; sequence WVIVLCALIFFAEGVRMAVHT.

It belongs to the CN hydrolase family. Apolipoprotein N-acyltransferase subfamily.

The protein localises to the cell inner membrane. It carries out the reaction N-terminal S-1,2-diacyl-sn-glyceryl-L-cysteinyl-[lipoprotein] + a glycerophospholipid = N-acyl-S-1,2-diacyl-sn-glyceryl-L-cysteinyl-[lipoprotein] + a 2-acyl-sn-glycero-3-phospholipid + H(+). It functions in the pathway protein modification; lipoprotein biosynthesis (N-acyl transfer). Its function is as follows. Catalyzes the phospholipid dependent N-acylation of the N-terminal cysteine of apolipoprotein, the last step in lipoprotein maturation. The sequence is that of Apolipoprotein N-acyltransferase 2 from Treponema pallidum (strain Nichols).